Here is an 85-residue protein sequence, read N- to C-terminus: Large ribosomal subunit protein bL27 (85 aa).

The protein belongs to the bacterial ribosomal protein bL27 family.

The sequence is that of Large ribosomal subunit protein bL27 from Campylobacter fetus subsp. fetus (strain 82-40).